The primary structure comprises 191 residues: Putative RNA-binding protein EEED8.4 (191 aa).

Positions 55 to 132 (KSVFIGNVDF…RPIVVTAKRT (78 aa)) constitute an RRM domain. A disordered region spans residues 136-160 (GMGHGVRGSSRGTFGRGRGAARGAP).

The chain is Putative RNA-binding protein EEED8.4 from Caenorhabditis elegans.